A 331-amino-acid polypeptide reads, in one-letter code: Adenosine deaminase (331 aa).

2 residues coordinate Zn(2+): His12 and His14. The substrate site is built by His14 and Asp16. His197 lines the Zn(2+) pocket. The active-site Proton donor is the Glu200. Asp278 provides a ligand contact to Zn(2+).

Belongs to the metallo-dependent hydrolases superfamily. Adenosine and AMP deaminases family. Adenosine deaminase subfamily. Requires Zn(2+) as cofactor.

It catalyses the reaction adenosine + H2O + H(+) = inosine + NH4(+). The catalysed reaction is 2'-deoxyadenosine + H2O + H(+) = 2'-deoxyinosine + NH4(+). Catalyzes the hydrolytic deamination of adenosine and 2-deoxyadenosine. In Shewanella pealeana (strain ATCC 700345 / ANG-SQ1), this protein is Adenosine deaminase.